A 1059-amino-acid chain; its full sequence is Zinc finger protein 865 (1059 aa).

3 disordered regions span residues 1–24 (MEAN…EDGV), 58–142 (LPCA…DAAF), and 161–206 (NLKR…CDPT). The span at 8-21 (SGAGGGGSSGIGGE) shows a compositional bias: gly residues. Positions 61 to 78 (APGPPPQPPPQPPPPQYD) are enriched in pro residues. Positions 93-119 (SSSSSSSSSSSSSSSSSSSSSSSSSQA) are enriched in low complexity. Pro residues-rich tracts occupy residues 124–137 (PPLP…PPPL) and 183–198 (APGP…PGPP). 2 consecutive C2H2-type zinc fingers follow at residues 224-246 (FPCG…MLVH) and 252-274 (YECG…RRCH). Positions 275–342 (KDVPPAAGGP…PAGVGVPPPA (68 aa)) are disordered. Positions 281 to 296 (AGGPPQPGPHLPPLGL) are enriched in pro residues. Composition is skewed to low complexity over residues 297–316 (PAPA…SSGP) and 324–337 (APSA…AGVG). 4 C2H2-type zinc fingers span residues 350–372 (FACP…QIIH), 378–400 (FSCS…VKTH), 407–429 (LPCG…QAAH), and 441–463 (YPCD…KAAH). Residues 461-503 (AAHAPPAAAAEAPKDGAASAPQPPPTFPPGPYLLPPDPPTTDS) are disordered. The segment covering 463-480 (HAPPAAAAEAPKDGAASA) has biased composition (low complexity). Residues 481-499 (PQPPPTFPPGPYLLPPDPP) show a composition bias toward pro residues. 5 consecutive C2H2-type zinc fingers follow at residues 550-572 (FCCG…ERIH), 578-600 (HQCP…HVVH), 606-628 (YKCE…RQVH), 669-691 (YACS…KEVH), and 697-719 (YGCD…KLVH). Residues 726–747 (LLPPAPGGLQPPDGSSGTDAAS) form a disordered region. C2H2-type zinc fingers lie at residues 792-814 (FSCA…KYVH), 820-842 (LGCG…RRSH), 848-870 (FRCP…QRCH), 876-898 (YRCG…RVVH), 904-926 (FKCG…RRLH), 932-954 (QRCS…QRLH), 960-982 (YRCE…QRAH), 989-1011 (LRCP…LAAH), and 1017-1039 (FRCS…RLAH). Lysine 802 is covalently cross-linked (Glycyl lysine isopeptide (Lys-Gly) (interchain with G-Cter in SUMO2)). A Glycyl lysine isopeptide (Lys-Gly) (interchain with G-Cter in SUMO2) cross-link involves residue lysine 1040.

This sequence belongs to the krueppel C2H2-type zinc-finger protein family.

It is found in the nucleus. Its function is as follows. May be involved in transcriptional regulation. The sequence is that of Zinc finger protein 865 (ZNF865) from Homo sapiens (Human).